The primary structure comprises 603 residues: Palladin (603 aa).

An interaction with VASP region spans residues 63 to 67; it reads FPPPP. At serine 133 the chain carries Phosphoserine. The interval 134–156 is disordered; that stretch reads PPTPAALLSPTKEPPPLLAKPKL. Residue threonine 136 is modified to Phosphothreonine. A phosphoserine mark is found at serine 142, serine 170, serine 256, and serine 261. The region spanning 278–362 is the Ig-like C2-type 1 domain; sequence PFFEMKLKHY…MAANTQGRVS (85 aa). The segment at 373-402 is disordered; that stretch reads NQRGRSPRSPPGHPHARRPRSRSRDSGDEN. Phosphoserine occurs at positions 378, 381, and 393. Phosphoserine; by PKB/AKT1 is present on serine 395. Serine 398 is subject to Phosphoserine. 2 consecutive Ig-like C2-type domains span residues 412–503 and 511–601; these read PHFL…LVVA and PVFI…ARLD. 2 interaction with EZR regions span residues 414–503 and 513–603; these read FLQA…LVVA and FIEK…LDVY. A disulfide bridge connects residues cysteine 433 and cysteine 485.

This sequence belongs to the myotilin/palladin family. Interacts with EPS8. Interacts with LASP1. Interacts with VASP. Interacts with ACTN. Interacts with SORBS2. Interacts with PFN1. Interacts with LPP. Interacts with SPIN90. Interacts with SRC. Interacts with EZR. Interacts with RAI14. Post-translationally, phosphorylated predominantly on serines and, to a lesser extent, on tyrosines. Phosphorylation at Ser-395 by PKB/AKT1 modulates cytoskeletal organization and cell motility. In adult central nervous system is detected in the brain and spinal cord, specially in the olfactory bulb, cerebral and cerebellar cortices, hippocampus, amygdala, superior colluculus, and superficial laminae of the spinal dorsal horn.

The protein localises to the cytoplasm. Its subcellular location is the cytoskeleton. It is found in the cell junction. The protein resides in the focal adhesion. It localises to the myofibril. The protein localises to the sarcomere. Its subcellular location is the z line. It is found in the cell projection. The protein resides in the ruffle. It localises to the podosome. The protein localises to the lamellipodium. Its subcellular location is the axon. It is found in the growth cone. Cytoskeletal protein required for organization of normal actin cytoskeleton. Roles in establishing cell morphology, motility, cell adhesion and cell-extracellular matrix interactions in a variety of cell types. May function as a scaffolding molecule with the potential to influence both actin polymerization and the assembly of existing actin filaments into higher-order arrays. Binds to proteins that bind to either monomeric or filamentous actin. Localizes at sites where active actin remodeling takes place, such as lamellipodia and membrane ruffles. Different isoforms may have functional differences. Plays a role in neurite outgrowth and in the establishment of polarity during neuronal morphogenesis. Participates in the acquisition of the reactive astrocyte morphology. This is Palladin (Palld) from Rattus norvegicus (Rat).